The chain runs to 337 residues: Phenylalanine--tRNA ligase alpha subunit (337 aa).

Glutamate 252 contacts Mg(2+).

Belongs to the class-II aminoacyl-tRNA synthetase family. Phe-tRNA synthetase alpha subunit type 1 subfamily. In terms of assembly, tetramer of two alpha and two beta subunits. Mg(2+) is required as a cofactor.

The protein resides in the cytoplasm. It catalyses the reaction tRNA(Phe) + L-phenylalanine + ATP = L-phenylalanyl-tRNA(Phe) + AMP + diphosphate + H(+). In Francisella tularensis subsp. mediasiatica (strain FSC147), this protein is Phenylalanine--tRNA ligase alpha subunit.